A 219-amino-acid chain; its full sequence is Ropporin-1-like protein (219 aa).

The 38-residue stretch at 17–54 folds into the RIIa domain; it reads PELPDILKQFTKAAIRTQPHDLLQWSAAYFDSLSKGEP.

This sequence belongs to the ropporin family. In terms of assembly, component of axonemal radial spoke complexes.

The protein localises to the cell projection. It is found in the cilium. Its subcellular location is the flagellum. In terms of biological role, functions as part of axonemal radial spoke complexes that play an important part in the motility of sperm and cilia. Important for male fertility. Involved in fibrous sheath integrity and sperm motility, plays a role in PKA-dependent signaling processes required for spermatozoa capacitation. This Xenopus laevis (African clawed frog) protein is Ropporin-1-like protein (ropn1l).